A 320-amino-acid chain; its full sequence is Glucokinase (320 aa).

12 to 17 (GDIGGT) contributes to the ATP binding site.

Belongs to the bacterial glucokinase family.

It is found in the cytoplasm. It carries out the reaction D-glucose + ATP = D-glucose 6-phosphate + ADP + H(+). This Nitrobacter hamburgensis (strain DSM 10229 / NCIMB 13809 / X14) protein is Glucokinase.